Here is a 576-residue protein sequence, read N- to C-terminus: Cyclic nucleotide-binding domain-containing protein 2 (576 aa).

A nucleoside 3',5'-cyclic phosphate is bound at residue 116 to 239 (SYRNYAEPLQ…DAQYRFEFFR (124 aa)).

It localises to the cytoplasm. The protein resides in the cytosol. Its function is as follows. Essential for male fertility. Plays an important role in spermatogenesis and regulates sperm motility by controlling the development of the flagellar bending of sperm. This chain is Cyclic nucleotide-binding domain-containing protein 2 (CNBD2), found in Homo sapiens (Human).